The sequence spans 139 residues: Histone H2A (139 aa).

The disordered stretch occupies residues 1–27 (MSGKGKAGKSGGKAGSETKSMSRSSKA). An N-acetylserine modification is found at S2. K9 and K13 each carry N6-acetyllysine. Residues 17–27 (ETKSMSRSSKA) are compositionally biased toward polar residues. Q110 is modified (N5-methylglutamine). The segment at 119–139 (PELLPSKSSKGKKDEGVSQEL) is disordered. The segment covering 129–139 (GKKDEGVSQEL) has biased composition (basic and acidic residues). Position 136 is a phosphoserine (S136). A [ST]-Q motif motif is present at residues 136-137 (SQ).

It belongs to the histone H2A family. The nucleosome is a histone octamer containing two molecules each of H2A, H2B, H3 and H4 assembled in one H3-H4 heterotetramer and two H2A-H2B heterodimers. The octamer wraps approximately 147 bp of DNA. Phosphorylated to form H2AS128ph (gamma-H2A) in response to DNA double-strand breaks (DSBs) generated by exogenous genotoxic agents and by stalled replication forks. Phosphorylation is dependent on the DNA damage checkpoint kinases MEC1/ATR and TEL1/ATM, spreads on either side of a detected DSB site and may mark the surrounding chromatin for recruitment of proteins required for DNA damage signaling and repair. Gamma-H2A is removed from the DNA prior to the strand invasion-primer extension step of the repair process and subsequently dephosphorylated. Dephosphorylation is necessary for efficient recovery from the DNA damage checkpoint. Post-translationally, acetylated by ESA1 to form H2AK4ac and H2AK7ac.

The protein localises to the nucleus. It is found in the chromosome. In terms of biological role, core component of nucleosome which plays a central role in DNA double strand break (DSB) repair. Nucleosomes wrap and compact DNA into chromatin, limiting DNA accessibility to the cellular machineries which require DNA as a template. Histones thereby play a central role in transcription regulation, DNA repair, DNA replication and chromosomal stability. DNA accessibility is regulated via a complex set of post-translational modifications of histones, also called histone code, and nucleosome remodeling. The sequence is that of Histone H2A from Agaricus bisporus (White button mushroom).